A 376-amino-acid polypeptide reads, in one-letter code: Histidinol-phosphate aminotransferase (376 aa).

Residue Lys230 is modified to N6-(pyridoxal phosphate)lysine.

It belongs to the class-II pyridoxal-phosphate-dependent aminotransferase family. Histidinol-phosphate aminotransferase subfamily. As to quaternary structure, homodimer. It depends on pyridoxal 5'-phosphate as a cofactor.

It carries out the reaction L-histidinol phosphate + 2-oxoglutarate = 3-(imidazol-4-yl)-2-oxopropyl phosphate + L-glutamate. It participates in amino-acid biosynthesis; L-histidine biosynthesis; L-histidine from 5-phospho-alpha-D-ribose 1-diphosphate: step 7/9. The chain is Histidinol-phosphate aminotransferase from Trichodesmium erythraeum (strain IMS101).